The primary structure comprises 308 residues: tRNA uridine(34) hydroxylase (308 aa).

The 95-residue stretch at 129–223 (QEKDVLILDA…YGKHPETQGV (95 aa)) folds into the Rhodanese domain. Cys-183 functions as the Cysteine persulfide intermediate in the catalytic mechanism.

The protein belongs to the TrhO family.

It catalyses the reaction uridine(34) in tRNA + AH2 + O2 = 5-hydroxyuridine(34) in tRNA + A + H2O. Catalyzes oxygen-dependent 5-hydroxyuridine (ho5U) modification at position 34 in tRNAs. In Aster yellows witches'-broom phytoplasma (strain AYWB), this protein is tRNA uridine(34) hydroxylase.